Reading from the N-terminus, the 346-residue chain is Cytosolic sulfotransferase 17 (346 aa).

Residue 89 to 94 (KTGTTW) participates in 3'-phosphoadenylyl sulfate binding. The Proton acceptor role is filled by histidine 151. Residues arginine 173, serine 181, tyrosine 239, and 309-311 (RKG) contribute to the 3'-phosphoadenylyl sulfate site.

Belongs to the sulfotransferase 1 family. In terms of tissue distribution, highly expressed in roots, stems and mature leaves. Low expression in young leaves and flowers. Barely detected in siliques.

It localises to the cytoplasm. It catalyses the reaction an aliphatic (Z)-desulfo-glucosinolate + 3'-phosphoadenylyl sulfate = a (Z)-omega-(methylsulfanyl)-N-sulfo-alkylhydroximate S-glucoside + adenosine 3',5'-bisphosphate + H(+). Inhibited by phosphoadenosine 5'-phosphate (PAP). Its function is as follows. Sulfotransferase that utilizes 3'-phospho-5'-adenylyl sulfate (PAPS) as sulfonate donor to catalyze the sulfate conjugation of desulfo-glucosinolates (dsGSs), the final step in the biosynthesis of the glucosinolate core structure. Substrate preference is desulfo-benzyl glucosinolate &gt; desulfo-6-methylthiohexyl glucosinolate. Increased specific activity with increasing chain length of desulfo-glucosinolate derived from methionine. Preferred substrate is desulfo-8-methylthiooctyl glucosinolate. The protein is Cytosolic sulfotransferase 17 (SOT17) of Arabidopsis thaliana (Mouse-ear cress).